A 323-amino-acid polypeptide reads, in one-letter code: Acetyl-coenzyme A carboxylase carboxyl transferase subunit alpha (323 aa).

The 255-residue stretch at 39–293 folds into the CoA carboxyltransferase C-terminal domain; sequence RLSKKSQQLT…RRALADSLRQ (255 aa).

The protein belongs to the AccA family. As to quaternary structure, acetyl-CoA carboxylase is a heterohexamer composed of biotin carboxyl carrier protein (AccB), biotin carboxylase (AccC) and two subunits each of ACCase subunit alpha (AccA) and ACCase subunit beta (AccD).

It is found in the cytoplasm. It catalyses the reaction N(6)-carboxybiotinyl-L-lysyl-[protein] + acetyl-CoA = N(6)-biotinyl-L-lysyl-[protein] + malonyl-CoA. The protein operates within lipid metabolism; malonyl-CoA biosynthesis; malonyl-CoA from acetyl-CoA: step 1/1. Functionally, component of the acetyl coenzyme A carboxylase (ACC) complex. First, biotin carboxylase catalyzes the carboxylation of biotin on its carrier protein (BCCP) and then the CO(2) group is transferred by the carboxyltransferase to acetyl-CoA to form malonyl-CoA. This chain is Acetyl-coenzyme A carboxylase carboxyl transferase subunit alpha, found in Burkholderia orbicola (strain AU 1054).